The chain runs to 928 residues: MRIKETLNLGKTAFPMRAGLPNREIDWQKGWADNNLYQQRQKLNEGKPSFVLHDGPPFANGNIHMGHALNKTSKDIIVRYKSMNGFRAPFVPGWDTHGLPIEQALAKKGIKRKEMSLVDYRKLCYDYAMEQVNTQRQDFKRLGISADWDNPYITLTADFEAEEIRVFGEMAKKGYIYKGKKPVYWSPSSESTLAEAEIEYKDIKSPSMYVAFNVVDGKDLLDADTKFIIWTTTPWTIPANLGIAVNPAFDYVQVLADGQKYVVAAERLNKMTDLLGWESVEILKTFKGADMELMTARHPLYDRESLVILGNHVTLETGTGLVHTAPGHGEDDYNAGTKYKLPVLSVVDSKGIMTEDAPGFEGVYYDKANPMVTEALEKNGSLLKLDFFTHSYPHDWRTKKPVIFRATAQWFASIDAFRDQILAQIEKVEFMPEWGKTRLYNMIRDRGDWVISRQRAWGVPLPIFYAEDGTEIITPETIERVAQLFAEHGSNVWFEWDAKDLLPAGFTHPGSPNGEFTKEKDIMDVWFDSGSSHQAVLAARDELTYPADLILEGSDQYRGWFNSSLITSVAVGEVSPYKAVISQGFVLDGNGRKMSKSLGNTILPEKIIKQMGADIVRLWVASVDASSDVKVTMENFQQVSEAYRKIRNTMRFMIANTTDFDPAKDTVDYAELGSVDKFMLVRLNAIIESCKAAYDAYDFATVYKTINMFLTNELSAFYLDFAKDVVYIDGQNDAPRRNMQTVFYAVAVALTKLLTPILPHTAEEIWSYLHEPEEFVQLAEMPEVAHFAGEEDLVATWNAFMGIRDDVLKALETARMDKVIGKSLEAAVTLYPNEANAALLASLDADVKQLLIVSQLTIADQAVEAPAEATQFDGVAVSVAHAEGDVCDRCRMIKTDVGSDDKFPMLCARCAAIVTANYPEAVAEGLEK.

The 'HIGH' region signature appears at 57–67 (PFANGNIHMGH). E552 contacts L-isoleucyl-5'-AMP. A 'KMSKS' region motif is present at residues 593–597 (KMSKS). K596 is a binding site for ATP. C887, C890, C907, and C910 together coordinate Zn(2+).

The protein belongs to the class-I aminoacyl-tRNA synthetase family. IleS type 1 subfamily. In terms of assembly, monomer. Zn(2+) is required as a cofactor.

The protein resides in the cytoplasm. The catalysed reaction is tRNA(Ile) + L-isoleucine + ATP = L-isoleucyl-tRNA(Ile) + AMP + diphosphate. Functionally, catalyzes the attachment of isoleucine to tRNA(Ile). As IleRS can inadvertently accommodate and process structurally similar amino acids such as valine, to avoid such errors it has two additional distinct tRNA(Ile)-dependent editing activities. One activity is designated as 'pretransfer' editing and involves the hydrolysis of activated Val-AMP. The other activity is designated 'posttransfer' editing and involves deacylation of mischarged Val-tRNA(Ile). This Latilactobacillus sakei subsp. sakei (strain 23K) (Lactobacillus sakei subsp. sakei) protein is Isoleucine--tRNA ligase.